The primary structure comprises 95 residues: Exodeoxyribonuclease 7 small subunit (95 aa).

The span at 62-83 (LTKDESKKTNKTGFRGESKTTE) shows a compositional bias: basic and acidic residues. Residues 62-95 (LTKDESKKTNKTGFRGESKTTETKNNTAQEEDLF) are disordered.

The protein belongs to the XseB family. As to quaternary structure, heterooligomer composed of large and small subunits.

It localises to the cytoplasm. It carries out the reaction Exonucleolytic cleavage in either 5'- to 3'- or 3'- to 5'-direction to yield nucleoside 5'-phosphates.. Bidirectionally degrades single-stranded DNA into large acid-insoluble oligonucleotides, which are then degraded further into small acid-soluble oligonucleotides. In Leptospira interrogans serogroup Icterohaemorrhagiae serovar copenhageni (strain Fiocruz L1-130), this protein is Exodeoxyribonuclease 7 small subunit.